A 425-amino-acid chain; its full sequence is Serine--tRNA ligase (425 aa).

Residue threonine 230–glutamate 232 participates in L-serine binding. An ATP-binding site is contributed by arginine 261–glutamate 263. Glutamate 284 contributes to the L-serine binding site. Residue glutamate 348–serine 351 coordinates ATP. Serine 384 is a binding site for L-serine.

Belongs to the class-II aminoacyl-tRNA synthetase family. Type-1 seryl-tRNA synthetase subfamily. As to quaternary structure, homodimer. The tRNA molecule binds across the dimer.

The protein localises to the cytoplasm. The catalysed reaction is tRNA(Ser) + L-serine + ATP = L-seryl-tRNA(Ser) + AMP + diphosphate + H(+). The enzyme catalyses tRNA(Sec) + L-serine + ATP = L-seryl-tRNA(Sec) + AMP + diphosphate + H(+). It functions in the pathway aminoacyl-tRNA biosynthesis; selenocysteinyl-tRNA(Sec) biosynthesis; L-seryl-tRNA(Sec) from L-serine and tRNA(Sec): step 1/1. In terms of biological role, catalyzes the attachment of serine to tRNA(Ser). Is also able to aminoacylate tRNA(Sec) with serine, to form the misacylated tRNA L-seryl-tRNA(Sec), which will be further converted into selenocysteinyl-tRNA(Sec). The chain is Serine--tRNA ligase from Streptococcus pyogenes serotype M2 (strain MGAS10270).